We begin with the raw amino-acid sequence, 834 residues long: MKYDHQSIEIKWQRTWEESGAFHCDHHSDKPKYYVLEMFPYPSGNIHMGHVRNYSIGDVVARFKRMQGFNVLHPMGWDAFGLPAENAAIKHGTHPAKWTFSNIDNMRTQLRRLGYSYDWRRELATCTPEYYRWEQQFFLRFFEKGLVYRKQAPQNWCPKCHTVLANEQVIEGLCWRCDSAVEQKNLTQWFLRITDYAEELLADLDKLEAGWPERVVSMQRNWIGKSIGAEIVFPLEGPGGSGNDDSITVFTTRQDTVFGATFMSLAPEHPLVEQLIDGKPEAPAVRAFVERIRNMDRIVRQSDDLEKEGVFTGAYCVNPFTGRRMPIWVANFVLAEYGTGAVMAVPAHDQRDFEFARKYDLPMQVVIQPEGDALDTAAMQAAWTEAGLLVNSGEFDGLPNEAAKQKIADSLETSGKGRRTVNYRLRDWNISRQRYWGAPIPVVYCDACGVVAEKDENLPVLLPLEVRTHEDGRSPLPDTPEFAECACPKCGGKARRETDTMDTFVESSWYFARYTSASKDDGAFDPAALKYWMPVDQYIGGVEHAILHLLYSRFFVKALRDCGYMDLDEPFANLLTQGMVLKEGAKMSKSKGNVVDPTEMIARYGADTVRLFCLFAAPPERDFDWSDSGIEGSYRFIGRIWRLAEELSGVLLPVKACSATAADAATPQGKDLRNKEHATVRKAGADISDRFQFNTAIAAVMELVNALYLAKDELSGDEGGRKVLSSAVATVLTLLSPITPHIAEELWASIGNAGRITDEPWPQWSEEALARDEETIVVQINGKLRGRVSVPAGADAKAIEAAALSEPNVARHLEDVTVRKVVVIPGKLVNVVVG.

Positions 40–50 match the 'HIGH' region motif; sequence PYPSGNIHMGH. Positions 586 to 590 match the 'KMSKS' region motif; that stretch reads KMSKS. Position 589 (Lys-589) interacts with ATP.

The protein belongs to the class-I aminoacyl-tRNA synthetase family.

Its subcellular location is the cytoplasm. It catalyses the reaction tRNA(Leu) + L-leucine + ATP = L-leucyl-tRNA(Leu) + AMP + diphosphate. In Nitratidesulfovibrio vulgaris (strain DSM 19637 / Miyazaki F) (Desulfovibrio vulgaris), this protein is Leucine--tRNA ligase.